The sequence spans 381 residues: Carboxylesterase 5A (381 aa).

S108 acts as the Acyl-ester intermediate in catalysis. An intrachain disulfide couples C162 to C173. N-linked (GlcNAc...) asparagine glycosylation is present at N163. Residue E227 is the Charge relay system of the active site. N-linked (GlcNAc...) asparagine glycosylation occurs at N245. The active-site Charge relay system is H336.

The protein belongs to the type-B carboxylesterase/lipase family. In terms of assembly, component of a epididymal complex at least composed of soluble form of prion protein PRNP, CLU, BPI, CES5A, MANBA and GLB1. N-glycosylated. In terms of tissue distribution, detected in corpus and cauda epididymal fluid. Present in seminal fluid but not found to be associated with sperm (at protein level). Not expressed in other tissues.

The protein localises to the secreted. The catalysed reaction is a carboxylic ester + H2O = an alcohol + a carboxylate + H(+). Involved in the detoxification of xenobiotics and in the activation of ester and amide prodrugs. The chain is Carboxylesterase 5A (CES5A) from Ovis aries (Sheep).